A 342-amino-acid chain; its full sequence is tRNA N6-adenosine threonylcarbamoyltransferase (342 aa).

Fe cation is bound by residues His-111 and His-115. Substrate is bound by residues 133–137 (VVSGG), Asp-166, Gly-179, Asp-183, and Asn-273. Residue Asp-301 participates in Fe cation binding.

It belongs to the KAE1 / TsaD family. Fe(2+) is required as a cofactor.

The protein localises to the cytoplasm. It catalyses the reaction L-threonylcarbamoyladenylate + adenosine(37) in tRNA = N(6)-L-threonylcarbamoyladenosine(37) in tRNA + AMP + H(+). Its function is as follows. Required for the formation of a threonylcarbamoyl group on adenosine at position 37 (t(6)A37) in tRNAs that read codons beginning with adenine. Is involved in the transfer of the threonylcarbamoyl moiety of threonylcarbamoyl-AMP (TC-AMP) to the N6 group of A37, together with TsaE and TsaB. TsaD likely plays a direct catalytic role in this reaction. The chain is tRNA N6-adenosine threonylcarbamoyltransferase from Trichlorobacter lovleyi (strain ATCC BAA-1151 / DSM 17278 / SZ) (Geobacter lovleyi).